Reading from the N-terminus, the 660-residue chain is Zinc transporter ZIP4 (660 aa).

A signal peptide spans 1 to 22; it reads MLPKSVTQGLVLALLVGTVAVA. The Extracellular segment spans residues 23-337; the sequence is RPRNLLSLLA…QDQLSQTERY (315 aa). Cystine bridges form between C56-C61, C64-C110, and C160-C195. N-linked (GlcNAc...) asparagine glycosylation is found at N192 and N219. Residues 233-273 are disordered; the sequence is GVGGEDHSDHDDHGDHADHSHPDRKASHQDSELHTPHNSNS. The span at 236–267 shows a compositional bias: basic and acidic residues; the sequence is GEDHSDHDDHGDHADHSHPDRKASHQDSELHT. An N-linked (GlcNAc...) asparagine glycan is attached at N272. Residues C280 and C319 are joined by a disulfide bond. A helical transmembrane segment spans residues 338–358; that stretch reads LYGSLATLLICLCAVFGLLLL. The Cytoplasmic segment spans residues 359-376; it reads TCAKCSTATHYIMQTFLS. Residues 377–397 traverse the membrane as a helical segment; it reads LAVGALTGDALLHLIPKVLGL. Residues 398–420 lie on the Extracellular side of the membrane; the sequence is HTHGGEGHTHEEEVGVGGQATWR. Residues 421–441 form a helical membrane-spanning segment; sequence LLAVLGGFYIFFLFESFFNLL. Topologically, residues 442–511 are cytoplasmic; sequence LPRDQDSEKD…LRAELRLLPY (70 aa). The short motif at 465–467 is the Essential for SLC39A4 endocytosis element; the sequence is LQL. Residues 512–531 traverse the membrane as a helical segment; it reads LITLGDAVHNFADGLAVGAA. Residues H520, N521, and D524 each contribute to the Zn(2+) site. At 532 to 539 the chain is on the extracellular side; it reads FSSSWKTG. The chain crosses the membrane as a helical span at residues 540–566; sequence LATSLAVFCHELPHELGDFAALLHAGL. Positions 549, 550, and 553 each coordinate Zn(2+). Topologically, residues 567–571 are cytoplasmic; the sequence is SVKRA. Residues 572 to 592 traverse the membrane as a helical segment; the sequence is LLLNLASALTAFAGLYVALAV. Residues 593 to 599 are Extracellular-facing; it reads GVGEEGE. A helical transmembrane segment spans residues 600–620; the sequence is AWILAVATGLFLYVALCDMLP. The Cytoplasmic segment spans residues 621–630; it reads AMMNVRDQRP. Residues 631-651 form a helical membrane-spanning segment; sequence WLLFLLHNVGLLGGWTVLLLL. Topologically, residues 652-660 are extracellular; sequence SLYEDNITF. The N-linked (GlcNAc...) asparagine glycan is linked to N657.

It belongs to the ZIP transporter (TC 2.A.5) family. As to quaternary structure, homodimer. Homodimerization is mediated by the transmembrane domain. Post-translationally, the extracellular N-terminal ectodomain is cleaved when cells are Zn(2+) deficient, N-terminally cleaved SLC39A4 is then internalized faster. Under excess Zn(2+) conditions, SLC39A4 on the cell surface is rapidly endocytosed, ubiquitinated, and degraded. In terms of processing, N-glycosylated. In terms of tissue distribution, highly expressed in the small intestine and embryonic visceral yolk sac. Weakly expressed in the stomach and liver.

It is found in the cell membrane. The protein resides in the recycling endosome membrane. The protein localises to the apical cell membrane. The enzyme catalyses Zn(2+)(in) = Zn(2+)(out). Functionally, selective transporter that mediates the uptake of Zn(2+). Plays an essential role for dietary zinc uptake from small intestine. The Zn(2+) uniporter activity is regulated by zinc availability. Also exhibits polyspecific binding and transport of Cu(2+), Cd(2+) and possibly Ni(2+) but at higher concentrations. The polypeptide is Zinc transporter ZIP4 (Slc39a4) (Mus musculus (Mouse)).